The chain runs to 66 residues: Large ribosomal subunit protein bL33c (66 aa).

This sequence belongs to the bacterial ribosomal protein bL33 family.

The protein localises to the plastid. The protein resides in the chloroplast. In Nicotiana sylvestris (Wood tobacco), this protein is Large ribosomal subunit protein bL33c.